A 355-amino-acid polypeptide reads, in one-letter code: Peptide chain release factor 1 (355 aa).

At Q233 the chain carries N5-methylglutamine. The span at 282–293 (RKKEQARADSRR) shows a compositional bias: basic and acidic residues. The disordered stretch occupies residues 282–305 (RKKEQARADSRRGQVGSGDRSERI).

Belongs to the prokaryotic/mitochondrial release factor family. In terms of processing, methylated by PrmC. Methylation increases the termination efficiency of RF1.

It localises to the cytoplasm. Its function is as follows. Peptide chain release factor 1 directs the termination of translation in response to the peptide chain termination codons UAG and UAA. The sequence is that of Peptide chain release factor 1 from Rickettsia rickettsii (strain Iowa).